The sequence spans 226 residues: Probable transcriptional regulatory protein y4xI (226 aa).

The region spanning 1-114 is the Response regulatory domain; that stretch reads MRTLLVDTDL…ELIARMRALL (114 aa). The ompR/PhoB-type DNA-binding region spans 122–220; it reads CPIIEFGNLH…VRGIGYTLEL (99 aa).

Its subcellular location is the cytoplasm. The chain is Probable transcriptional regulatory protein y4xI from Sinorhizobium fredii (strain NBRC 101917 / NGR234).